The chain runs to 423 residues: Citrate synthase-like protein clz17 (423 aa).

Residues H357 and D413 contribute to the active site.

This sequence belongs to the citrate synthase family.

The protein operates within secondary metabolite biosynthesis. Citrate synthase-like protein; part of the gene cluster that mediates the biosynthesis of squalestatin S1 (SQS1, also known as zaragozic acid A), a heavily oxidized fungal polyketide that offers potent cholesterol lowering activity by targeting squalene synthase (SS). SQS1 is composed of a 2,8-dioxobicyclic[3.2.1]octane-3,4,5-tricarboxyclic acid core that is connected to two lipophilic polyketide arms. These initial steps feature the priming of an unusual benzoic acid starter unit onto the highly reducing polyketide synthase clz14, followed by oxaloacetate extension and product release to generate a tricarboxylic acid containing product. The phenylalanine ammonia lyase (PAL) clz10 and the acyl-CoA ligase clz12 are involved in transforming phenylalanine into benzoyl-CoA. The citrate synthase-like protein clz17 is involved in connecting the C-alpha-carbons of the hexaketide chain and oxaloacetate to afford the tricarboxylic acid unit. The potential hydrolytic enzymes, clz11 and clz13, are in close proximity to pks2 and may participate in product release. On the other side, the tetraketide arm is synthesized by a the squalestatin tetraketide synthase clz2 and enzymatically esterified to the core in the last biosynthetic step, by the acetyltransferase clz6. The biosynthesis of the tetraketide must involve 3 rounds of chain extension. After the first and second rounds methyl-transfer occurs, and in all rounds of extension the ketoreductase and dehydratase are active. The enoyl reductase and C-MeT of clz2 are not active in the final round of extension. The acetyltransferase clz6 appears to have a broad substrate selectivity for its acyl CoA substrate, allowing the in vitro synthesis of novel squalestatins. The biosynthesis of SQS1 requires several oxidative steps likely performed by oxidoreductases clz3, clz15 and clz16. Finally, in support of the identification of the cluster as being responsible for SQS1 production, the cluster contains a gene encoding a putative squalene synthase (SS) clz20, suggesting a likely mechanism for self-resistance. The chain is Citrate synthase-like protein clz17 from Cochliobolus lunatus (Filamentous fungus).